The primary structure comprises 240 residues: Uridylate kinase (240 aa).

An ATP-binding site is contributed by 13–16 (KASG). The involved in allosteric activation by GTP stretch occupies residues 21 to 26 (GSQGFG). Residue Gly55 participates in UMP binding. ATP contacts are provided by Gly56 and Arg60. UMP is bound by residues Asp75 and 136-143 (TGNPFFTT). The ATP site is built by Thr163, Gln164, Tyr169, and Asp172.

This sequence belongs to the UMP kinase family. In terms of assembly, homohexamer.

The protein resides in the cytoplasm. It catalyses the reaction UMP + ATP = UDP + ADP. It participates in pyrimidine metabolism; CTP biosynthesis via de novo pathway; UDP from UMP (UMPK route): step 1/1. Its activity is regulated as follows. Allosterically activated by GTP. Inhibited by UTP. Its function is as follows. Catalyzes the reversible phosphorylation of UMP to UDP. This is Uridylate kinase from Brucella abortus biovar 1 (strain 9-941).